We begin with the raw amino-acid sequence, 362 residues long: Ferredoxin--NADP reductase, leaf isozyme 1, chloroplastic (362 aa).

A chloroplast-targeting transit peptide spans 1-62 (MAAVTAAAVS…DAAAVAAAPA (62 aa)). The FAD-binding FR-type domain occupies 83 to 205 (KEPYVGKCLL…TGPVGKEMLM (123 aa)). FAD is bound by residues 141–144 (RLYS), 162–164 (CVK), Tyr-168, 179–181 (VCS), and Thr-220. Ser-144 and Lys-164 together coordinate NADP(+). An intrachain disulfide couples Cys-180 to Cys-185. Ser-181 is modified (phosphoserine). NADP(+) is bound by residues Thr-220, 252 to 253 (VP), 282 to 283 (SR), Lys-292, 321 to 322 (GL), and Glu-360.

This sequence belongs to the ferredoxin--NADP reductase type 1 family. As to quaternary structure, component of high molecular weight thylakoid LFNRs-containing protein complexes containing LIR1, LFNR1, LFNR2, TIC62 and TROL proteins. Interacts directly with LIR1 and TIC62; LIR1 increases the affinity of LFNR1 and LFNR2 for TIC62. Requires FAD as cofactor. May form interchain disulfide bonds with LIR1.

The protein resides in the plastid. It localises to the chloroplast stroma. Its subcellular location is the chloroplast thylakoid membrane. The enzyme catalyses 2 reduced [2Fe-2S]-[ferredoxin] + NADP(+) + H(+) = 2 oxidized [2Fe-2S]-[ferredoxin] + NADPH. Its pathway is energy metabolism; photosynthesis. Its function is as follows. May play a key role in regulating the relative amounts of cyclic and non-cyclic electron flow to meet the demands of the plant for ATP and reducing power. The protein is Ferredoxin--NADP reductase, leaf isozyme 1, chloroplastic of Oryza sativa subsp. japonica (Rice).